The primary structure comprises 190 residues: ATP synthase subunit b, chloroplastic (190 aa).

The helical transmembrane segment at 35 to 55 threads the bilayer; that stretch reads LSVVLGVLIFFGKGVCASCLL.

Belongs to the ATPase B chain family. In terms of assembly, F-type ATPases have 2 components, F(1) - the catalytic core - and F(0) - the membrane proton channel. F(1) has five subunits: alpha(3), beta(3), gamma(1), delta(1), epsilon(1). F(0) has four main subunits: a(1), b(1), b'(1) and c(10-14). The alpha and beta chains form an alternating ring which encloses part of the gamma chain. F(1) is attached to F(0) by a central stalk formed by the gamma and epsilon chains, while a peripheral stalk is formed by the delta, b and b' chains.

It is found in the plastid. Its subcellular location is the chloroplast thylakoid membrane. In terms of biological role, f(1)F(0) ATP synthase produces ATP from ADP in the presence of a proton or sodium gradient. F-type ATPases consist of two structural domains, F(1) containing the extramembraneous catalytic core and F(0) containing the membrane proton channel, linked together by a central stalk and a peripheral stalk. During catalysis, ATP synthesis in the catalytic domain of F(1) is coupled via a rotary mechanism of the central stalk subunits to proton translocation. Functionally, component of the F(0) channel, it forms part of the peripheral stalk, linking F(1) to F(0). This chain is ATP synthase subunit b, chloroplastic, found in Coffea arabica (Arabian coffee).